The following is a 119-amino-acid chain: Large ribosomal subunit protein bL20 (119 aa).

The protein belongs to the bacterial ribosomal protein bL20 family.

Functionally, binds directly to 23S ribosomal RNA and is necessary for the in vitro assembly process of the 50S ribosomal subunit. It is not involved in the protein synthesizing functions of that subunit. The protein is Large ribosomal subunit protein bL20 of Dechloromonas aromatica (strain RCB).